We begin with the raw amino-acid sequence, 306 residues long: D-alanine--D-alanine ligase (306 aa).

The 194-residue stretch at K107–E300 folds into the ATP-grasp domain. M134–S184 contacts ATP. D251, E267, and N269 together coordinate Mg(2+).

Belongs to the D-alanine--D-alanine ligase family. The cofactor is Mg(2+). Mn(2+) is required as a cofactor.

The protein resides in the cytoplasm. The enzyme catalyses 2 D-alanine + ATP = D-alanyl-D-alanine + ADP + phosphate + H(+). It participates in cell wall biogenesis; peptidoglycan biosynthesis. Functionally, cell wall formation. The chain is D-alanine--D-alanine ligase from Ruegeria pomeroyi (strain ATCC 700808 / DSM 15171 / DSS-3) (Silicibacter pomeroyi).